A 552-amino-acid chain; its full sequence is Non-structural protein NS1 (552 aa).

This sequence belongs to the orbivirus non-structural protein NS1 family.

The polypeptide is Non-structural protein NS1 (Segment-5) (Antilocapra americana (Pronghorn)).